The primary structure comprises 66 residues: Cold shock protein 1 (66 aa).

The CSD domain occupies 4–63 (GTVKWFNADKGYGFITGEDGNDVFVHFSAIQTDGFKTLEEGQKVTFDEESSDRGPQAANV). The interval 47–66 (VTFDEESSDRGPQAANVVPQ) is disordered.

It localises to the cytoplasm. This is Cold shock protein 1 (csp) from Lactiplantibacillus plantarum (strain ATCC BAA-793 / NCIMB 8826 / WCFS1) (Lactobacillus plantarum).